Consider the following 89-residue polypeptide: Large ribosomal subunit protein bL28 (89 aa).

This sequence belongs to the bacterial ribosomal protein bL28 family.

The protein is Large ribosomal subunit protein bL28 of Chlamydia trachomatis serovar A (strain ATCC VR-571B / DSM 19440 / HAR-13).